Here is a 96-residue protein sequence, read N- to C-terminus: Co-chaperonin GroES (96 aa).

The protein belongs to the GroES chaperonin family. As to quaternary structure, heptamer of 7 subunits arranged in a ring. Interacts with the chaperonin GroEL.

It localises to the cytoplasm. Functionally, together with the chaperonin GroEL, plays an essential role in assisting protein folding. The GroEL-GroES system forms a nano-cage that allows encapsulation of the non-native substrate proteins and provides a physical environment optimized to promote and accelerate protein folding. GroES binds to the apical surface of the GroEL ring, thereby capping the opening of the GroEL channel. This is Co-chaperonin GroES from Buchnera aphidicola subsp. Schizaphis graminum (strain Sg).